Reading from the N-terminus, the 1345-residue chain is CRISPR-associated endonuclease Cas9 (1345 aa).

The active-site For RuvC-like nuclease domain is the Asp10. Residues Asp10, Glu762, and Glu766 each contribute to the Mg(2+) site. The 152-residue stretch at 770–921 (TNQGRRNSQQ…DKAGFIKRQL (152 aa)) folds into the HNH Cas9-type domain. His840 functions as the Proton acceptor for HNH nuclease domain in the catalytic mechanism. His983 contributes to the Mg(2+) binding site.

The protein belongs to the CRISPR-associated protein Cas9 family. Subtype II-A subfamily. As to quaternary structure, monomer. Binds crRNA and tracrRNA. It depends on Mg(2+) as a cofactor.

CRISPR (clustered regularly interspaced short palindromic repeat) is an adaptive immune system that provides protection against mobile genetic elements (viruses, transposable elements and conjugative plasmids). CRISPR clusters contain spacers, sequences complementary to antecedent mobile elements, and target invading nucleic acids. CRISPR clusters are transcribed and processed into CRISPR RNA (crRNA). In type II CRISPR systems correct processing of pre-crRNA requires a trans-encoded small RNA (tracrRNA), endogenous ribonuclease 3 (rnc) and this protein. The tracrRNA serves as a guide for ribonuclease 3-aided processing of pre-crRNA. Subsequently Cas9/crRNA/tracrRNA endonucleolytically cleaves linear or circular dsDNA target complementary to the spacer; Cas9 is inactive in the absence of the 2 guide RNAs (gRNA). Cas9 recognizes the protospacer adjacent motif (PAM) in the CRISPR repeat sequences to help distinguish self versus nonself, as targets within the bacterial CRISPR locus do not have PAMs. PAM recognition is also required for catalytic activity. Complements the gRNA coprocessing defect in a cas9 deletion in S.pyogenes strain 370 and cuts target plasmid in Cas9:gRNAs mixing experiments with S.thermophilus CRISPR3 from strain LMD-9. The chain is CRISPR-associated endonuclease Cas9 from Streptococcus mutans serotype c (strain ATCC 700610 / UA159).